The sequence spans 51 residues: Large ribosomal subunit protein bL33 (51 aa).

Residues methionine 1–arginine 24 are disordered.

This sequence belongs to the bacterial ribosomal protein bL33 family.

This chain is Large ribosomal subunit protein bL33, found in Cellvibrio japonicus (strain Ueda107) (Pseudomonas fluorescens subsp. cellulosa).